We begin with the raw amino-acid sequence, 212 residues long: uncharacterized protein (212 aa).

This is an uncharacterized protein from Archaeoglobus fulgidus (strain ATCC 49558 / DSM 4304 / JCM 9628 / NBRC 100126 / VC-16).